The following is a 97-amino-acid chain: Protein RALF-like 2 (97 aa).

The N-terminal stretch at 1 to 25 (MEARHMLVTILLLSFVFMNIMKVEA) is a signal peptide. Disulfide bonds link cysteine 42–cysteine 49 and cysteine 61–cysteine 67.

This sequence belongs to the plant rapid alkalinization factor (RALF) family.

It is found in the secreted. Functionally, cell signaling peptide that may regulate plant stress, growth, and development. Mediates a rapid alkalinization of extracellular space by mediating a transient increase in the cytoplasmic Ca(2+) concentration leading to a calcium-dependent signaling events through a cell surface receptor and a concomitant activation of some intracellular mitogen-activated protein kinases. The sequence is that of Protein RALF-like 2 (RALFL2) from Arabidopsis thaliana (Mouse-ear cress).